The following is a 163-amino-acid chain: Putative 4-hydroxy-4-methyl-2-oxoglutarate aldolase (163 aa).

Residues 75–78 and Arg-97 contribute to the substrate site; that span reads GDQL. Residue Asp-98 participates in a divalent metal cation binding.

It belongs to the class II aldolase/RraA-like family. Homotrimer. A divalent metal cation is required as a cofactor.

It catalyses the reaction 4-hydroxy-4-methyl-2-oxoglutarate = 2 pyruvate. It carries out the reaction oxaloacetate + H(+) = pyruvate + CO2. Its function is as follows. Catalyzes the aldol cleavage of 4-hydroxy-4-methyl-2-oxoglutarate (HMG) into 2 molecules of pyruvate. Also contains a secondary oxaloacetate (OAA) decarboxylase activity due to the common pyruvate enolate transition state formed following C-C bond cleavage in the retro-aldol and decarboxylation reactions. The chain is Putative 4-hydroxy-4-methyl-2-oxoglutarate aldolase from Photobacterium profundum (strain SS9).